The chain runs to 161 residues: Putative acetyltransferase SAR0816 (161 aa).

Belongs to the transferase hexapeptide repeat family.

This Staphylococcus aureus (strain MRSA252) protein is Putative acetyltransferase SAR0816.